Consider the following 108-residue polypeptide: Protein S100-A15A (108 aa).

The EF-hand domain maps to 53–88 (KEPYYVTELFQATDKNRDNQICFDEFLYILGKLVKD). Ca(2+) contacts are provided by D66, N68, D70, Q72, and E77.

This sequence belongs to the S-100 family.

This is Protein S100-A15A (S100A15A) from Gorilla gorilla gorilla (Western lowland gorilla).